The following is an 885-amino-acid chain: Leucine--tRNA ligase (885 aa).

The 'HIGH' region signature appears at 43 to 53 (PYTSGQLHMGH). The 'KMSKS' region signature appears at 571–575 (KMSKS). K574 is an ATP binding site. The disordered stretch occupies residues 866 to 885 (SVANKAEPGRPAIHVDEADD).

Belongs to the class-I aminoacyl-tRNA synthetase family.

The protein localises to the cytoplasm. The catalysed reaction is tRNA(Leu) + L-leucine + ATP = L-leucyl-tRNA(Leu) + AMP + diphosphate. In Halobacterium salinarum (strain ATCC 700922 / JCM 11081 / NRC-1) (Halobacterium halobium), this protein is Leucine--tRNA ligase.